A 276-amino-acid chain; its full sequence is MAKFRLSLVQFLVSPVKSDNLNKACKLIKEAAQKGAQIVALPECFNSPYGTKYFPEYAEKIPGESTELLSQVAKECGIYLIGGSIPEEDSGKFYNTCAVFGPDGTLLVKHRKIHLFDIDVPGKIRFQESETLSPGDSFSVFDTPYCKVGVGICYDMRFAELAQIYANKGCQLLVYPGAFNMTTGPAHWELLQRARALDNQVYVATASPARDEKASYVAWGHSTVVSPWGEVIAKAGFEETVISADIDLQYLAEIREQIPIRRQRRDNLYTVEEKKN.

The 245-residue stretch at 4 to 248 (FRLSLVQFLV…ETVISADIDL (245 aa)) folds into the CN hydrolase domain. Glu43 functions as the Proton acceptor in the catalytic mechanism. Lys112 serves as the catalytic Proton donor. Cys153 functions as the Nucleophile in the catalytic mechanism.

It belongs to the carbon-nitrogen hydrolase superfamily. NIT1/NIT2 family. In terms of assembly, homodimer.

It is found in the cytoplasm. It carries out the reaction 2-oxoglutaramate + H2O = 2-oxoglutarate + NH4(+). It catalyses the reaction 2-oxosuccinamate + H2O = oxaloacetate + NH4(+). In terms of biological role, has omega-amidase activity. The role of omega-amidase is to remove potentially toxic intermediates by converting 2-oxoglutaramate and 2-oxosuccinamate to biologically useful 2-oxoglutarate and oxaloacetate, respectively. The chain is Omega-amidase NIT2-B (nit2b) from Xenopus laevis (African clawed frog).